A 402-amino-acid chain; its full sequence is Nodulation protein E (402 aa).

Residues 2 to 401 (DRRVVITGMG…GTNAVLAFKQ (400 aa)) form the Ketosynthase family 3 (KS3) domain. Catalysis depends on for beta-ketoacyl synthase activity residues Cys-162, His-294, and His-331. Residues 329–348 (HAHCIGAASALEMIACVMAI) form a helical membrane-spanning segment.

The protein belongs to the thiolase-like superfamily. Beta-ketoacyl-ACP synthases family.

It localises to the cell inner membrane. Functionally, proposed to synthesize NOD factor fatty acyl chain. Involved in the synthesis of a highly unsaturated fatty acid moiety, which forms part of a lipo-oligosaccharide that is responsible for host specificity. The polypeptide is Nodulation protein E (nodE) (Rhizobium meliloti (strain 1021) (Ensifer meliloti)).